Consider the following 552-residue polypeptide: Gamma-aminobutyric acid receptor subunit alpha-4 (552 aa).

The N-terminal stretch at 1–35 is a signal peptide; sequence MVSVQKVPAIVLCSGVSLALLHVLCLATCLNESPG. The Extracellular segment spans residues 36–259; it reads QNSKDEKLCP…FHLRRKMGYF (224 aa). Asn47 carries N-linked (GlcNAc...) asparagine glycosylation. Position 100 (Arg100) interacts with 4-aminobutanoate. N-linked (GlcNAc...) asparagine glycosylation is found at Asn144 and Asn157. Residue Thr163 participates in 4-aminobutanoate binding. Cys172 and Cys186 are joined by a disulfide. Residues 260 to 280 form a helical membrane-spanning segment; the sequence is MIQTYIPCIMTVILSQVSFWI. Over 281–284 the chain is Cytoplasmic; sequence NKES. The chain crosses the membrane as a helical span at residues 285–305; the sequence is VPARTVFGITTVLTMTTLSIS. Residues 306 to 318 lie on the Extracellular side of the membrane; it reads ARHSLPKVSYATA. A helical membrane pass occupies residues 319–341; the sequence is MDWFIAVCFAFVFSALIEFAAVN. Residues 342-515 lie on the Cytoplasmic side of the membrane; it reads YFTNIQMQKA…PPPSGSGTSK (174 aa). Disordered stretches follow at residues 353–436, 448–470, and 486–513; these read KKIS…NPFS, ARGLSSAASPSPHGTLQPAPLRS, and TTVNTTGVPGNVSATPPPSAPPPSGSGT. Positions 403–423 are enriched in polar residues; sequence RTEVGNHSSKTTAAQESSETT. Composition is skewed to low complexity over residues 448 to 458 and 486 to 499; these read ARGLSSAASPS and TTVNTTGVPGNVSA. Pro residues predominate over residues 500 to 509; the sequence is TPPPSAPPPS. A helical membrane pass occupies residues 516–538; the sequence is IDKYARILFPVTFGAFNMVYWVV. At 539-552 the chain is on the extracellular side; it reads YLSKDTMEKSESLM.

It belongs to the ligand-gated ion channel (TC 1.A.9) family. Gamma-aminobutyric acid receptor (TC 1.A.9.5) subfamily. GABRA4 sub-subfamily. As to quaternary structure, heteropentamer, formed by a combination of alpha (GABRA1-6), beta (GABRB1-3), gamma (GABRG1-3), delta (GABRD), epsilon (GABRE), rho (GABRR1-3), pi (GABRP) and theta (GABRQ) chains, each subunit exhibiting distinct physiological and pharmacological properties. As to expression, expressed in the brain.

It is found in the cell membrane. Its subcellular location is the postsynaptic cell membrane. Potentiated by histamine. In terms of biological role, alpha subunit of the heteropentameric ligand-gated chloride channel gated by gamma-aminobutyric acid (GABA), a major inhibitory neurotransmitter in the brain. GABA-gated chloride channels, also named GABA(A) receptors (GABAAR), consist of five subunits arranged around a central pore and contain GABA active binding site(s) located at the alpha and beta subunit interface(s). Alpha-4/GABRA4 subunit often assembles with delta or gamma-2 subunits, in combination with beta subunits. When activated by GABA, GABAARs selectively allow the flow of chloride anions across the cell membrane down their electrochemical gradient. GABAARs containing alpha-4 are predominantly extrasynaptic, contributing to tonic inhibition in dentate granule cells and thalamic relay neurons. Extrasynaptic alpha-4-containing GABAARs control levels of excitability and network activity. GABAAR containing alpha-4-beta-3-delta subunits can simultaneously bind GABA and histamine where histamine binds at the interface of two neighboring beta subunits, which may be involved in the regulation of sleep and wakefulness. The sequence is that of Gamma-aminobutyric acid receptor subunit alpha-4 from Rattus norvegicus (Rat).